A 114-amino-acid chain; its full sequence is MNKDDLDLDLEIIDESPSSEGEEERKERLFNESLKIIKSAMENVIQEIVIKLEDGSTHIVYVTKLDWVDGKVVMDFAVLDQERKAELAPHVEKCITMQLQDAFNKRSKKKFKFF.

The span at M1–D14 shows a compositional bias: acidic residues. Positions M1–K26 are disordered.

Functionally, helps head vertex assembly. The sequence is that of Head formation protein (40) from Escherichia coli (Bacteriophage T4).